Consider the following 168-residue polypeptide: Thiol peroxidase (168 aa).

Residues 20-168 (PAVGSQLPAF…DYDKALAALA (149 aa)) enclose the Thioredoxin domain. The active-site Cysteine sulfenic acid (-SOH) intermediate is the cysteine 62. Cysteine 62 and cysteine 96 form a disulfide bridge.

The protein belongs to the peroxiredoxin family. Tpx subfamily. Homodimer.

It catalyses the reaction a hydroperoxide + [thioredoxin]-dithiol = an alcohol + [thioredoxin]-disulfide + H2O. Functionally, thiol-specific peroxidase that catalyzes the reduction of hydrogen peroxide and organic hydroperoxides to water and alcohols, respectively. Plays a role in cell protection against oxidative stress by detoxifying peroxides. The protein is Thiol peroxidase of Chlorobaculum tepidum (strain ATCC 49652 / DSM 12025 / NBRC 103806 / TLS) (Chlorobium tepidum).